The chain runs to 233 residues: Protein-L-isoaspartate O-methyltransferase (233 aa).

Serine 83 is a catalytic residue.

The protein belongs to the methyltransferase superfamily. L-isoaspartyl/D-aspartyl protein methyltransferase family.

The protein localises to the cytoplasm. It carries out the reaction [protein]-L-isoaspartate + S-adenosyl-L-methionine = [protein]-L-isoaspartate alpha-methyl ester + S-adenosyl-L-homocysteine. In terms of biological role, catalyzes the methyl esterification of L-isoaspartyl residues in peptides and proteins that result from spontaneous decomposition of normal L-aspartyl and L-asparaginyl residues. It plays a role in the repair and/or degradation of damaged proteins. This chain is Protein-L-isoaspartate O-methyltransferase, found in Opitutus terrae (strain DSM 11246 / JCM 15787 / PB90-1).